The chain runs to 347 residues: NADH-ubiquinone oxidoreductase chain 2 (347 aa).

Transmembrane regions (helical) follow at residues 3–23 (PMTF…VMMS), 59–79 (YFLT…INLL), 89–109 (LINP…LGLA), 150–170 (NLNI…WGGL), 178–198 (IMAY…MYNP), 201–221 (MLLN…LLMI), 237–257 (LPLI…LPPL), 276–296 (IILS…YTRI), and 326–346 (LPLM…TAIL).

It belongs to the complex I subunit 2 family. As to quaternary structure, core subunit of respiratory chain NADH dehydrogenase (Complex I) which is composed of 45 different subunits. Interacts with TMEM242.

It is found in the mitochondrion inner membrane. It catalyses the reaction a ubiquinone + NADH + 5 H(+)(in) = a ubiquinol + NAD(+) + 4 H(+)(out). Core subunit of the mitochondrial membrane respiratory chain NADH dehydrogenase (Complex I) which catalyzes electron transfer from NADH through the respiratory chain, using ubiquinone as an electron acceptor. Essential for the catalytic activity and assembly of complex I. In Nyctophilus arnhemensis (Northern long-eared bat), this protein is NADH-ubiquinone oxidoreductase chain 2.